The primary structure comprises 160 residues: Phosphopantetheine adenylyltransferase (160 aa).

T10 lines the substrate pocket. ATP contacts are provided by residues 10-11 (TF) and H18. Substrate-binding residues include K42, M74, and R88. ATP-binding positions include 89–91 (GLR), E99, and 124–130 (LSFLSSS).

This sequence belongs to the bacterial CoaD family. As to quaternary structure, homohexamer. Mg(2+) is required as a cofactor.

Its subcellular location is the cytoplasm. It carries out the reaction (R)-4'-phosphopantetheine + ATP + H(+) = 3'-dephospho-CoA + diphosphate. It participates in cofactor biosynthesis; coenzyme A biosynthesis; CoA from (R)-pantothenate: step 4/5. In terms of biological role, reversibly transfers an adenylyl group from ATP to 4'-phosphopantetheine, yielding dephospho-CoA (dPCoA) and pyrophosphate. This chain is Phosphopantetheine adenylyltransferase, found in Photorhabdus laumondii subsp. laumondii (strain DSM 15139 / CIP 105565 / TT01) (Photorhabdus luminescens subsp. laumondii).